The chain runs to 232 residues: U2 small nuclear ribonucleoprotein B'' (232 aa).

Positions 10 to 89 (QSIYIQNLNE…KPMRLQYAKA (80 aa)) constitute an RRM 1 domain. Residues 100–157 (TFVPKDKKRKQEEKVERKREDSQRPNTANGPSANGPSANNGVPAPSFQPSGQETMPPN) form a disordered region. The segment covering 108–122 (RKQEEKVERKREDSQ) has biased composition (basic and acidic residues). 2 stretches are compositionally biased toward polar residues: residues 123-139 (RPNT…SANN) and 146-156 (FQPSGQETMPP). Residues 158-232 (NILFIQNLPH…NPMVISFAKK (75 aa)) enclose the RRM 2 domain.

It belongs to the RRM U1 A/B'' family. As to quaternary structure, component of the spliceosome where it is associated with snRNP U2.

The protein localises to the nucleus. Its subcellular location is the cajal body. It localises to the nucleoplasm. It is found in the cytoplasm. Involved in nuclear pre-mRNA splicing. The sequence is that of U2 small nuclear ribonucleoprotein B'' (U2B'') from Arabidopsis thaliana (Mouse-ear cress).